We begin with the raw amino-acid sequence, 133 residues long: Small ribosomal subunit protein uS19 (133 aa).

This sequence belongs to the universal ribosomal protein uS19 family.

Its function is as follows. Protein S19 forms a complex with S13 that binds strongly to the 16S ribosomal RNA. This is Small ribosomal subunit protein uS19 from Thermococcus sibiricus (strain DSM 12597 / MM 739).